Consider the following 553-residue polypeptide: ATP synthase F(1) complex subunit alpha, mitochondrial (553 aa).

The transit peptide at 1–43 (MLSVRVAAAVARALPRRAGLVSKNALGSSFVGARNLHASNTRL) directs the protein to the mitochondrion. Residues S53 and S65 each carry the phosphoserine modification. A Phosphoserine; alternate modification is found at S76. Residue S76 is glycosylated (O-linked (GlcNAc) serine; alternate). S106 carries the post-translational modification Phosphoserine. Residues K123, K126, and K132 each carry the N6-acetyllysine modification. T134 carries the post-translational modification Phosphothreonine. The residue at position 161 (K161) is an N6-acetyllysine; alternate. K161 carries the post-translational modification N6-succinyllysine; alternate. S166 is subject to Phosphoserine. Position 167 is an N6-acetyllysine; alternate (K167). Position 167 is an N6-succinyllysine; alternate (K167). S184 carries the post-translational modification Phosphoserine. Position 204 is an omega-N-methylarginine (R204). 5 residues coordinate ATP: Q215, G217, K218, T219, and S220. T219 serves as a coordination point for Mg(2+). An N6-acetyllysine; alternate mark is found at K230 and K239. N6-succinyllysine; alternate occurs at positions 230 and 239. Residue K240 is modified to N6-acetyllysine. 2 positions are modified to N6-acetyllysine; alternate: K261 and K305. An N6-succinyllysine; alternate mark is found at K261 and K305. D312 lines the Mg(2+) pocket. An N6-acetyllysine; alternate modification is found at K427. K427 is subject to N6-succinyllysine; alternate. K434 carries the N6-acetyllysine modification. Positions 473 and 475 each coordinate ATP. N6-acetyllysine; alternate is present on residues K498 and K506. N6-succinyllysine; alternate is present on residues K498 and K506. S521 is subject to Phosphoserine. N6-acetyllysine; alternate is present on residues K531 and K539. Residues K531 and K539 each carry the N6-succinyllysine; alternate modification. K541 is subject to N6-acetyllysine.

Belongs to the ATPase alpha/beta chains family. In terms of assembly, homotrimer. Component of the ATP synthase complex composed at least of ATP5F1A/subunit alpha, ATP5F1B/subunit beta, ATP5MC1/subunit c (homooctomer), MT-ATP6/subunit a, MT-ATP8/subunit 8, ATP5ME/subunit e, ATP5MF/subunit f, ATP5MG/subunit g, ATP5MK/subunit k, ATP5MJ/subunit j, ATP5F1C/subunit gamma, ATP5F1D/subunit delta, ATP5F1E/subunit epsilon, ATP5PF/subunit F6, ATP5PB/subunit b, ATP5PD/subunit d, ATP5PO/subunit OSCP. ATP synthase complex consists of a soluble F(1) head domain (subunits alpha(3) and beta(3)) - the catalytic core - and a membrane F(0) domain - the membrane proton channel (subunits c, a, 8, e, f, g, k and j). These two domains are linked by a central stalk (subunits gamma, delta, and epsilon) rotating inside the F1 region and a stationary peripheral stalk (subunits F6, b, d, and OSCP). Interacts with ATPAF2. Interacts with HRG; the interaction occurs on the surface of T-cells and alters the cell morphology when associated with concanavalin (in vitro). Interacts with PLG (angiostatin peptide); the interaction inhibits most of the angiogenic properties of angiostatin. Interacts with BLOC1S1. Interacts with BCL2L1 isoform BCL-X(L); the interaction mediates the association of BCL2L1 isoform BCL-X(L) with the mitochondrial membrane F(1)F(0) ATP synthase and enhances neurons metabolic efficiency. Interacts with CLN5 and PPT1. Interacts with S100A1; this interaction increases F1-ATPase activity. Interacts with ABCB7; this interaction allows the regulation of cellular iron homeostasis and cellular reactive oxygen species (ROS) levels in cardiomyocytes. In terms of processing, acetylated on lysine residues. BLOC1S1 is required for acetylation. Acetylation of Lys-132, Lys-230 and Lys-498 is observed in liver mitochondria from fasted mice but not from fed mice.

It is found in the mitochondrion inner membrane. The protein resides in the cell membrane. Functionally, subunit alpha, of the mitochondrial membrane ATP synthase complex (F(1)F(0) ATP synthase or Complex V) that produces ATP from ADP in the presence of a proton gradient across the membrane which is generated by electron transport complexes of the respiratory chain. ATP synthase complex consist of a soluble F(1) head domain - the catalytic core - and a membrane F(1) domain - the membrane proton channel. These two domains are linked by a central stalk rotating inside the F(1) region and a stationary peripheral stalk. During catalysis, ATP synthesis in the catalytic domain of F(1) is coupled via a rotary mechanism of the central stalk subunits to proton translocation. In vivo, can only synthesize ATP although its ATP hydrolase activity can be activated artificially in vitro. With the catalytic subunit beta (ATP5F1B), forms the catalytic core in the F(1) domain. Subunit alpha does not bear the catalytic high-affinity ATP-binding sites. The chain is ATP synthase F(1) complex subunit alpha, mitochondrial from Mus musculus (Mouse).